The sequence spans 162 residues: Protein lon-8 (162 aa).

An N-terminal signal peptide occupies residues 1-23; sequence MRNSRFCAILAVISAISVSYVLA.

It is found in the secreted. Functionally, secreted protein that is involved in larval elongation, early adult growth and male tail development. This chain is Protein lon-8, found in Caenorhabditis elegans.